The primary structure comprises 70 residues: Small ribosomal subunit protein bS21 (70 aa).

The protein belongs to the bacterial ribosomal protein bS21 family.

The chain is Small ribosomal subunit protein bS21 (rpsU) from Helicobacter pylori (strain J99 / ATCC 700824) (Campylobacter pylori J99).